Here is a 175-residue protein sequence, read N- to C-terminus: Large ribosomal subunit protein uL10 (175 aa).

It belongs to the universal ribosomal protein uL10 family. Part of the ribosomal stalk of the 50S ribosomal subunit. The N-terminus interacts with L11 and the large rRNA to form the base of the stalk. The C-terminus forms an elongated spine to which L12 dimers bind in a sequential fashion forming a multimeric L10(L12)X complex.

Functionally, forms part of the ribosomal stalk, playing a central role in the interaction of the ribosome with GTP-bound translation factors. This Prochlorococcus marinus (strain AS9601) protein is Large ribosomal subunit protein uL10.